The following is a 229-amino-acid chain: UPF0173 metal-dependent hydrolase SAOUHSC_01815 (229 aa).

It belongs to the UPF0173 family.

In Staphylococcus aureus (strain NCTC 8325 / PS 47), this protein is UPF0173 metal-dependent hydrolase SAOUHSC_01815.